A 257-amino-acid polypeptide reads, in one-letter code: Capsid protein (257 aa).

The protein belongs to the geminiviridae capsid protein family.

It is found in the virion. Its function is as follows. Encapsidates the viral DNA into characteristic twinned ('geminate') particles. Plays a role in protection of the genome from degradation, virus acquisition and transmission by insect vectors, infectivity, and systemic movement. The chain is Capsid protein from Capsicum annuum (Capsicum pepper).